The following is a 112-amino-acid chain: UPF0060 membrane protein XOO1694 (112 aa).

The next 4 helical transmembrane spans lie at 8–28 (LLLF…PYLW), 32–52 (GGSV…VWLL), 62–82 (VYAA…LWWV), and 92–112 (LLGA…PRSA).

This sequence belongs to the UPF0060 family.

It localises to the cell inner membrane. This is UPF0060 membrane protein XOO1694 from Xanthomonas oryzae pv. oryzae (strain MAFF 311018).